Consider the following 337-residue polypeptide: Trace amine-associated receptor 5 (337 aa).

Residues 1–34 (MRAVFIQGAEEHPAAFCYQVNGSCPRTVHTLGIQ) are Extracellular-facing. Asn21 carries N-linked (GlcNAc...) asparagine glycosylation. Intrachain disulfides connect Cys24/Cys188 and Cys99/Cys192. Residues 35–55 (LVIYLACAAGMLIIVLGNVFV) traverse the membrane as a helical segment. Topologically, residues 56–70 (AFAVSYFKALHTPTN) are cytoplasmic. A helical transmembrane segment spans residues 71 to 91 (FLLLSLALADMFLGLLVLPLS). Residues 92–109 (TIRSVESCWFFGDFLCRL) lie on the Extracellular side of the membrane. A helical membrane pass occupies residues 110-130 (HTYLDTLFCLTSIFHLCFISI). Residues 131–154 (DRHCAICDPLLYPSKFTVRVALRY) are Cytoplasmic-facing. A helical membrane pass occupies residues 155 to 175 (ILAGWGVPAAYTSLFLYTDVV). Positions 176–189 (ETRLSQWLEEMPCV) are extracellular Loop 2 (ECL2). Residues 176–204 (ETRLSQWLEEMPCVGSCQLLLNKFWGWLN) lie on the Extracellular side of the membrane. Residues 205–225 (FPLFFVPCLIMISLYVKIFVV) form a helical membrane-spanning segment. Over 226-253 (ATRQAQQITTLSKSLAGAAKHERKAAKT) the chain is Cytoplasmic. The helical transmembrane segment at 254–274 (LGIAVGIYLLCWLPFTIDTMV) threads the bilayer. The Extracellular segment spans residues 275-284 (DSLLHFITPP). Residues 285–307 (LVFDIFIWFAYFNSACNPIIYVF) form a helical membrane-spanning segment. Over 308–337 (SYQWFRKALKLTLSQKVFSPQTRTVDLYQE) the chain is Cytoplasmic.

It belongs to the G-protein coupled receptor 1 family. Expressed almost exclusively in skeletal muscle and selected areas of the brain, such amygdala, hippocampus, caudate nucleus, thalamus and hypothalamus. Weak expression is also find in substantia nigra.

It localises to the cell membrane. In terms of biological role, olfactory receptor specific for trimethylamine, a trace amine. Also activated at lower level by dimethylethylamine. Trimethylamine is a bacterial metabolite found in some animal odors, and to humans it is a repulsive odor associated with bad breath and spoiled food. Trimethylamine-binding causes a conformation change that triggers signaling via G(s)-class of G alpha proteins (GNAL or GNAS). The sequence is that of Trace amine-associated receptor 5 from Homo sapiens (Human).